Reading from the N-terminus, the 304-residue chain is Quinolinate synthase (304 aa).

Residues histidine 24 and serine 41 each coordinate iminosuccinate. [4Fe-4S] cluster is bound at residue cysteine 86. Iminosuccinate-binding positions include tyrosine 112–asparagine 114 and serine 129. Cysteine 171 provides a ligand contact to [4Fe-4S] cluster. Residues histidine 197 to glutamate 199 and threonine 214 each bind iminosuccinate. Cysteine 259 provides a ligand contact to [4Fe-4S] cluster.

This sequence belongs to the quinolinate synthase family. Type 2 subfamily. [4Fe-4S] cluster is required as a cofactor.

Its subcellular location is the cytoplasm. It carries out the reaction iminosuccinate + dihydroxyacetone phosphate = quinolinate + phosphate + 2 H2O + H(+). Its pathway is cofactor biosynthesis; NAD(+) biosynthesis; quinolinate from iminoaspartate: step 1/1. In terms of biological role, catalyzes the condensation of iminoaspartate with dihydroxyacetone phosphate to form quinolinate. The polypeptide is Quinolinate synthase (Methanosarcina barkeri (strain Fusaro / DSM 804)).